Reading from the N-terminus, the 149-residue chain is MKCPFCGNLETQVVETRVSEDADFIRRRRQCGACEKRFTTYERPDVNFPAIVKKDGRRIEYKRGKILGSMNLALRKRPVSTEQIDSAIERIEEKLLSLGVREVPSNRLGELVMRELKKLDKVAYVRFASVYRSFEDIDEFKTLVDEVRR.

Residues 3 to 34 (CPFCGNLETQVVETRVSEDADFIRRRRQCGAC) fold into a zinc finger. Residues 49-139 (PAIVKKDGRR…VYRSFEDIDE (91 aa)) enclose the ATP-cone domain.

The protein belongs to the NrdR family. Zn(2+) is required as a cofactor.

Negatively regulates transcription of bacterial ribonucleotide reductase nrd genes and operons by binding to NrdR-boxes. This Polaromonas sp. (strain JS666 / ATCC BAA-500) protein is Transcriptional repressor NrdR.